The chain runs to 358 residues: Ferredoxin--NADP reductase (358 aa).

Residues Asp-38, Gln-46, Tyr-51, Val-91, Phe-126, Asp-301, and Thr-341 each contribute to the FAD site.

The protein belongs to the ferredoxin--NADP reductase type 2 family. In terms of assembly, homodimer. The cofactor is FAD.

The enzyme catalyses 2 reduced [2Fe-2S]-[ferredoxin] + NADP(+) + H(+) = 2 oxidized [2Fe-2S]-[ferredoxin] + NADPH. This is Ferredoxin--NADP reductase from Paracidovorax citrulli (strain AAC00-1) (Acidovorax citrulli).